Here is a 619-residue protein sequence, read N- to C-terminus: DNA mismatch repair protein MutL (619 aa).

The protein belongs to the DNA mismatch repair MutL/HexB family.

In terms of biological role, this protein is involved in the repair of mismatches in DNA. It is required for dam-dependent methyl-directed DNA mismatch repair. May act as a 'molecular matchmaker', a protein that promotes the formation of a stable complex between two or more DNA-binding proteins in an ATP-dependent manner without itself being part of a final effector complex. This chain is DNA mismatch repair protein MutL, found in Xylella fastidiosa (strain M23).